The primary structure comprises 385 residues: MDSPSSVSSYSSYSLSSSFPTSPVNSDFGFPSDSEREDKGAHGPRPDTVGQRGGSRPSPGPIRCRHRSKVSGNQHTPSHPKQRGSASPMAGSGAKRSRDGELETSLNTQGCTTEGDLLFAQKCKELQGFIPPLTDLLNGLKMGRFERGLSSFQQSVAMDRIQRIVGVLQKPQMGERYLGTLLQVEGMLKTWFPQIAAQKSSLGGGKHQLTKHFPSHHSDSAASSPASPMEKMDQTQLGHLALKPKQPWHLTQWPAMNLTWIHTTPICNPPLSSPGTISFSHGPLGTGTGIGVILFLQHGVQPFTHSAPTTPVPPTTASPVIPGEPMKLSGEGPRCYSLPVTLPSDWSYTLSPPSLPTLARKMTIGHREQQRSHPPVAADAHLLNL.

Over residues 1 to 26 (MDSPSSVSSYSSYSLSSSFPTSPVNS) the composition is skewed to low complexity. Disordered stretches follow at residues 1 to 108 (MDSP…SLNT), 203 to 233 (GGGKHQLTKHFPSHHSDSAASSPASPMEKMD), and 365 to 385 (GHREQQRSHPPVAADAHLLNL). The span at 33–45 (DSEREDKGAHGPR) shows a compositional bias: basic and acidic residues. A compositionally biased stretch (polar residues) spans 70–79 (VSGNQHTPSH).

As to quaternary structure, interacts with PER2, CRY2, BHLHE41, HDAC1 and NR3C1. Interacts with BMAL1.

Its subcellular location is the nucleus. It localises to the PML body. In terms of biological role, transcriptional repressor which forms a negative regulatory component of the circadian clock and acts independently of the circadian transcriptional repressors: CRY1, CRY2 and BHLHE41. In a histone deacetylase-dependent manner represses the transcriptional activator activity of the CLOCK-BMAL1 heterodimer. Abrogates the interaction of BMAL1 with the transcriptional coactivator CREBBP and can repress the histone acetyl-transferase activity of the CLOCK-BMAL1 heterodimer, reducing histone acetylation of its target genes. Rhythmically binds the E-box elements (5'-CACGTG-3') on circadian gene promoters and its occupancy shows circadian oscillation antiphasic to BMAL1. Interacts with the glucocorticoid receptor (NR3C1) and contributes to the repressive function in the glucocorticoid response. The chain is Circadian-associated transcriptional repressor (CIART) from Homo sapiens (Human).